We begin with the raw amino-acid sequence, 154 residues long: MTQDYKLQVEAIKCGTVIDHIPAQIGFKLLSLFKLTATDQRITIGLNLPSKRSGRKDLIKIENTFLTEQQANQLAMYAPDATVNRIDNYEVVKKLTLSLPEHIDGVLTCPNSNCISHNEPVDSSFKVKAKQGEIHLKCKYCEKEFDHQVVLQAD.

The Zn(2+) site is built by Cys-109, Cys-114, Cys-138, and Cys-141.

The protein belongs to the PyrI family. As to quaternary structure, contains catalytic and regulatory chains. Zn(2+) is required as a cofactor.

In terms of biological role, involved in allosteric regulation of aspartate carbamoyltransferase. In Yersinia enterocolitica serotype O:8 / biotype 1B (strain NCTC 13174 / 8081), this protein is Aspartate carbamoyltransferase regulatory chain.